The sequence spans 247 residues: 6-carboxyhexanoate--CoA ligase (247 aa).

The protein belongs to the BioW family. As to quaternary structure, homodimer. The cofactor is Mg(2+).

The catalysed reaction is heptanedioate + ATP + CoA = 6-carboxyhexanoyl-CoA + AMP + diphosphate. It participates in metabolic intermediate metabolism; pimeloyl-CoA biosynthesis; pimeloyl-CoA from pimelate: step 1/1. Its function is as follows. Catalyzes the transformation of pimelate into pimeloyl-CoA with concomitant hydrolysis of ATP to AMP. The polypeptide is 6-carboxyhexanoate--CoA ligase (Corynebacterium diphtheriae (strain ATCC 700971 / NCTC 13129 / Biotype gravis)).